Reading from the N-terminus, the 211-residue chain is Uridine kinase (211 aa).

13-20 is an ATP binding site; the sequence is GASASGKS.

This sequence belongs to the uridine kinase family.

It is found in the cytoplasm. The enzyme catalyses uridine + ATP = UMP + ADP + H(+). It carries out the reaction cytidine + ATP = CMP + ADP + H(+). It participates in pyrimidine metabolism; CTP biosynthesis via salvage pathway; CTP from cytidine: step 1/3. Its pathway is pyrimidine metabolism; UMP biosynthesis via salvage pathway; UMP from uridine: step 1/1. This Shewanella pealeana (strain ATCC 700345 / ANG-SQ1) protein is Uridine kinase.